The following is a 349-amino-acid chain: 5-deoxyribose 1-phosphate isomerase (349 aa).

Residues 49–51 (RGA), Arg-92, and Gln-199 each bind substrate. Residue Asp-240 is the Proton donor of the active site. A substrate-binding site is contributed by 250–251 (NK).

Belongs to the EIF-2B alpha/beta/delta subunits family. DrdI subfamily.

The catalysed reaction is 5-deoxy-alpha-D-ribose 1-phosphate = 5-deoxy-D-ribulose 1-phosphate. It participates in carbohydrate degradation. Functionally, catalyzes the isomerization of 5-deoxy-alpha-D-ribose 1-phosphate to 5-deoxy-D-ribulose 1-phosphate, as part of a 5-deoxyribose salvage pathway that recycles this toxic radical SAM enzyme by-product to mainstream metabolites. This chain is 5-deoxyribose 1-phosphate isomerase, found in Clostridium botulinum (strain 657 / Type Ba4).